The sequence spans 511 residues: Ribose import ATP-binding protein RbsA (511 aa).

ABC transporter domains lie at Val13 to Ala249 and Ala260 to Ala503. Residue Gly45–Ser52 coordinates ATP.

Belongs to the ABC transporter superfamily. Ribose importer (TC 3.A.1.2.1) family. In terms of assembly, the complex is composed of an ATP-binding protein (RbsA), two transmembrane proteins (RbsC) and a solute-binding protein (RbsB).

It localises to the cell inner membrane. The enzyme catalyses D-ribose(out) + ATP + H2O = D-ribose(in) + ADP + phosphate + H(+). Functionally, part of the ABC transporter complex RbsABC involved in ribose import. Responsible for energy coupling to the transport system. The protein is Ribose import ATP-binding protein RbsA of Roseobacter denitrificans (strain ATCC 33942 / OCh 114) (Erythrobacter sp. (strain OCh 114)).